A 485-amino-acid polypeptide reads, in one-letter code: P2X purinoceptor 2 (485 aa).

Over 1-43 the chain is Cytoplasmic; it reads MAAAQPRLPAGAAMVRRLARGCWSAFWDYETPKVIVVRNRRLG. Intrachain disulfides connect cysteine 22–cysteine 443, cysteine 126–cysteine 177, cysteine 137–cysteine 160, cysteine 143–cysteine 171, cysteine 227–cysteine 237, and cysteine 271–cysteine 280. Residues 44-64 traverse the membrane as a helical segment; the sequence is FVHRMVQLLILLYFVWYVFIV. Residues 65 to 339 lie on the Extracellular side of the membrane; the sequence is QKSYQDSETG…IVHGQAGKFS (275 aa). Residues lysine 82 and lysine 84 each coordinate ATP. Asparagine 195 carries an N-linked (GlcNAc...) asparagine glycan. Residue threonine 197 participates in ATP binding. N-linked (GlcNAc...) asparagine glycosylation is present at asparagine 252. Residues serine 297, asparagine 301, and arginine 303 each coordinate ATP. N-linked (GlcNAc...) asparagine glycosylation is present at asparagine 311. An ATP-binding site is contributed by lysine 321. Residues 322–335 are pore-forming motif; that stretch reads AYGIRIDVIVHGQA. Residues 340-360 form a helical membrane-spanning segment; it reads LIPTIINLATALTSIGVGSFL. Over 361 to 485 the chain is Cytoplasmic; the sequence is CDWILLTFMN…STDPKGLAQL (125 aa). A disordered region spans residues 406 to 485; it reads PPPSHYSQDQ…STDPKGLAQL (80 aa). Residues 420 to 436 are compositionally biased toward low complexity; sequence PSGEGPALGEGAELPLA. The segment covering 469 to 478 has biased composition (polar residues); that stretch reads PSQQDSTSTD.

It belongs to the P2X receptor family. As to quaternary structure, homotrimer and heterotrimer; functional P2XRs are organized as homomeric and heteromeric trimers. Homotrimer. Forms heterotrimer with P2XR1. Forms heterotrimer with P2XR3. Forms heterotrimer with P2XR6.

It is found in the cell membrane. The catalysed reaction is Ca(2+)(in) = Ca(2+)(out). The enzyme catalyses K(+)(in) = K(+)(out). It catalyses the reaction Na(+)(in) = Na(+)(out). With respect to regulation, fast activation by external ATP. Exhibits slow desensitization during prolonged ATP activation. Not sensitive to the ATP agonist:alpha/beta-methylene-ATP. Functionally, ATP-gated nonselective transmembrane cation channel permeable to potassium, sodium and calcium. Activation by extracellular ATP induces a variety of cellular responses, such as excitatory postsynaptic responses in sensory neurons, neuromuscular junctions (NMJ) formation, hearing, perception of taste and peristalsis. In the inner ear, regulates sound transduction and auditory neurotransmission, outer hair cell electromotility, inner ear gap junctions, and K(+) recycling. Mediates synaptic transmission between neurons and from neurons to smooth muscle. The sequence is that of P2X purinoceptor 2 (P2rx2) from Mus musculus (Mouse).